We begin with the raw amino-acid sequence, 571 residues long: Carboxylesterase 3 (571 aa).

Positions 1–26 (MERAVRVESGVLVGVVCLLLACPATA) are cleaved as a signal peptide. C97 and C124 are oxidised to a cystine. The N-linked (GlcNAc...) asparagine glycan is linked to N105. S229 serves as the catalytic Acyl-ester intermediate. Residues C281 and C292 are joined by a disulfide bond. Residues E347 and H460 each act as charge relay system in the active site. The Prevents secretion from ER signature appears at 568–571 (QEDL).

This sequence belongs to the type-B carboxylesterase/lipase family. N-glycosylated. As to expression, expressed in liver, colon and small intestine.

It is found in the endoplasmic reticulum lumen. The catalysed reaction is a carboxylic ester + H2O = an alcohol + a carboxylate + H(+). Functionally, involved in the detoxification of xenobiotics and in the activation of ester and amide prodrugs. Shows low catalytic efficiency for hydrolysis of CPT-11 (7-ethyl-10-[4-(1-piperidino)-1-piperidino]-carbonyloxycamptothecin), a prodrug for camptothecin used in cancer therapeutics. This is Carboxylesterase 3 (CES3) from Homo sapiens (Human).